A 575-amino-acid chain; its full sequence is Interleukin-1 receptor-like 2 (575 aa).

The N-terminal stretch at 1–19 is a signal peptide; it reads MWSLLLCGLSIALPLSVTA. Ig-like C2-type domains follow at residues 20–111, 126–211, and 222–318; these read DGCK…VNLT, PNLS…VLNG, and YGGS…MCHA. Residues 20–335 lie on the Extracellular side of the membrane; it reads DGCKDIFMKN…ILQLPAPDFR (316 aa). N-linked (GlcNAc...) asparagine glycans are attached at residues asparagine 41, asparagine 59, asparagine 109, asparagine 127, asparagine 184, asparagine 234, asparagine 250, asparagine 266, and asparagine 299. Cysteine 42 and cysteine 95 form a disulfide bridge. Cysteines 146 and 195 form a disulfide. Cysteine 249 and cysteine 316 are oxidised to a cystine. Residues 336–356 traverse the membrane as a helical segment; the sequence is AYLIGGLIALVAVAVSVVYIY. At 357–575 the chain is on the cytoplasmic side; the sequence is NIFKIDIVLW…RRKKCTLTTG (219 aa). The region spanning 381–536 is the TIR domain; that stretch reads KLYDAYVLYP…KFWKTVRYHM (156 aa). The active site involves glutamate 467.

It belongs to the interleukin-1 receptor family. Interacts with IL1RAP; the association is enhanced by IL36B indicative for an functional signaling complex and inhibited by IL36RN. In terms of tissue distribution, expressed in synovial fibroblasts and articular chondrocytes. Expressed in keratinocytes and monocyte-derived dendritic cells. Expressed in monocytes and myeloid dendritic cells; at protein level.

It is found in the membrane. It catalyses the reaction NAD(+) + H2O = ADP-D-ribose + nicotinamide + H(+). Functionally, receptor for interleukin-36 (IL36A, IL36B and IL36G). After binding to interleukin-36 associates with the coreceptor IL1RAP to form the interleukin-36 receptor complex which mediates interleukin-36-dependent activation of NF-kappa-B, MAPK and other pathways. The IL-36 signaling system is thought to be present in epithelial barriers and to take part in local inflammatory response; it is similar to the IL-1 system. Seems to be involved in skin inflammatory response by induction of the IL-23/IL-17/IL-22 pathway. This chain is Interleukin-1 receptor-like 2 (IL1RL2), found in Homo sapiens (Human).